Here is a 583-residue protein sequence, read N- to C-terminus: Extracellular serine/threonine protein kinase four-jointed (583 aa).

Topologically, residues 1 to 78 (MYDIKRLEAG…RRRSLQRRAC (78 aa)) are cytoplasmic. The helical; Signal-anchor for type II membrane protein transmembrane segment at 79-99 (LLSILAAFVFGMALGVVVPMF) threads the bilayer. The Extracellular segment spans residues 100 to 583 (GLPRHQDSPP…LGQVQKCQGS (484 aa)). The segment at 179–222 (RTASGRYRKGPERRLSKKMPERVQPQETSRSPTTSPTNPTSEHQ) is disordered. Positions 187-199 (KGPERRLSKKMPE) are enriched in basic and acidic residues. Residues 206–219 (TSRSPTTSPTNPTS) show a composition bias toward low complexity. N310 and N379 each carry an N-linked (GlcNAc...) asparagine glycan. The tract at residues 384 to 421 (MQSERQAQSQPHGLLKRLGAASSPGSAHQSNAIEETGT) is disordered. A glycan (N-linked (GlcNAc...) asparagine) is linked at N491.

Belongs to the FJX1/FJ family. Post-translationally, proteolytically cleaved to yield a secreted protein. In the eye disk, expressed in a gradient ahead of the morphogenetic furrow, high at the equator and low at the poles of the eye. In the leg disk, expressed in concentric rings, possibly corresponding to segmental boundaries. In the wing disk, expression is localized in the wing pouch; low in peripheral regions and high towards the center.

Its subcellular location is the golgi apparatus membrane. The protein localises to the secreted. It carries out the reaction L-seryl-[protein] + ATP = O-phospho-L-seryl-[protein] + ADP + H(+). It catalyses the reaction L-threonyl-[protein] + ATP = O-phospho-L-threonyl-[protein] + ADP + H(+). Its function is as follows. Golgi serine/threonine protein kinase required for intermediate growth in the proximal-distal axis. Phosphorylates specific residues within extracellular cadherin domains of Fat (ft) and Dachsous (ds) as they transit through the Golgi. Acts in ommatidial polarity determination as a secondary signal downstream of Notch, JAK/STAT and wingless. Also necessary for the initiation, up-regulation or maintenance of Notch ligand, Serrate (Ser) expression in legs, thereby participating in a feedback loop with N signaling. Sufficient for joint formation and growth in the leg. The sequence is that of Extracellular serine/threonine protein kinase four-jointed from Drosophila melanogaster (Fruit fly).